The chain runs to 179 residues: Large ribosomal subunit protein uL6 (179 aa).

This sequence belongs to the universal ribosomal protein uL6 family. As to quaternary structure, part of the 50S ribosomal subunit.

In terms of biological role, this protein binds to the 23S rRNA, and is important in its secondary structure. It is located near the subunit interface in the base of the L7/L12 stalk, and near the tRNA binding site of the peptidyltransferase center. In Prochlorococcus marinus (strain MIT 9515), this protein is Large ribosomal subunit protein uL6.